Reading from the N-terminus, the 365-residue chain is Cobalt-precorrin-5B C(1)-methyltransferase (365 aa).

The protein belongs to the CbiD family.

It catalyses the reaction Co-precorrin-5B + S-adenosyl-L-methionine = Co-precorrin-6A + S-adenosyl-L-homocysteine. Its pathway is cofactor biosynthesis; adenosylcobalamin biosynthesis; cob(II)yrinate a,c-diamide from sirohydrochlorin (anaerobic route): step 6/10. In terms of biological role, catalyzes the methylation of C-1 in cobalt-precorrin-5B to form cobalt-precorrin-6A. This Methanococcus maripaludis (strain C5 / ATCC BAA-1333) protein is Cobalt-precorrin-5B C(1)-methyltransferase.